The primary structure comprises 290 residues: ATP synthase gamma chain (290 aa).

It belongs to the ATPase gamma chain family. F-type ATPases have 2 components, CF(1) - the catalytic core - and CF(0) - the membrane proton channel. CF(1) has five subunits: alpha(3), beta(3), gamma(1), delta(1), epsilon(1). CF(0) has three main subunits: a, b and c.

It is found in the cell inner membrane. Functionally, produces ATP from ADP in the presence of a proton gradient across the membrane. The gamma chain is believed to be important in regulating ATPase activity and the flow of protons through the CF(0) complex. The polypeptide is ATP synthase gamma chain (Chlorobium luteolum (strain DSM 273 / BCRC 81028 / 2530) (Pelodictyon luteolum)).